The chain runs to 254 residues: RING-H2 finger protein ATL28 (254 aa).

A helical transmembrane segment spans residues 25–45; it reads VVLTGVLLFVIFAGFFSLFLW. The RING-type; atypical zinc-finger motif lies at 103–145; sequence CAICLSEFSDEDTVRLITVCRHPFHSNCIDLWFELHKTCPVCR.

Belongs to the RING-type zinc finger family. ATL subfamily.

The protein resides in the membrane. The catalysed reaction is S-ubiquitinyl-[E2 ubiquitin-conjugating enzyme]-L-cysteine + [acceptor protein]-L-lysine = [E2 ubiquitin-conjugating enzyme]-L-cysteine + N(6)-ubiquitinyl-[acceptor protein]-L-lysine.. The protein operates within protein modification; protein ubiquitination. The protein is RING-H2 finger protein ATL28 (ATL28) of Arabidopsis thaliana (Mouse-ear cress).